Here is a 290-residue protein sequence, read N- to C-terminus: Agroclavine dehydrogenase (290 aa).

This sequence belongs to the fgaFS/easG family. As to quaternary structure, monomer.

The catalysed reaction is agroclavine + NADP(+) = didehydroagroclavine + NADPH + H(+). It functions in the pathway alkaloid biosynthesis; ergot alkaloid biosynthesis. In terms of biological role, agroclavine dehydrogenase; part of the gene cluster that mediates the biosynthesis of fungal ergot alkaloid. DmaW catalyzes the first step of ergot alkaloid biosynthesis by condensing dimethylallyl diphosphate (DMAP) and tryptophan to form 4-dimethylallyl-L-tryptophan. The second step is catalyzed by the methyltransferase easF that methylates 4-dimethylallyl-L-tryptophan in the presence of S-adenosyl-L-methionine, resulting in the formation of 4-dimethylallyl-L-abrine. The catalase easC and the FAD-dependent oxidoreductase easE then transform 4-dimethylallyl-L-abrine to chanoclavine-I which is further oxidized by easD in the presence of NAD(+), resulting in the formation of chanoclavine-I aldehyde. Agroclavine dehydrogenase easG then mediates the conversion of chanoclavine-I aldehyde to agroclavine via a non-enzymatic adduct reaction: the substrate is an iminium intermediate that is formed spontaneously from chanoclavine-I aldehyde in the presence of glutathione. The presence of easA is not required to complete this reaction. Further conversion of agroclavine to paspalic acid is a two-step process involving oxidation of agroclavine to elymoclavine and of elymoclavine to paspalic acid, the second step being performed by the elymoclavine oxidase cloA. Paspalic acid is then further converted to D-lysergic acid. Ergopeptines are assembled from D-lysergic acid and three different amino acids by the D-lysergyl-peptide-synthetases composed each of a monomudular and a trimodular nonribosomal peptide synthetase subunit. LpsB and lpsC encode the monomodular subunits responsible for D-lysergic acid activation and incorporation into the ergopeptine backbone. LpsA1 and A2 subunits encode the trimodular nonribosomal peptide synthetase assembling the tripeptide portion of ergopeptines. LpsA1 is responsible for formation of the major ergopeptine, ergotamine, and lpsA2 for alpha-ergocryptine, the minor ergopeptine of the total alkaloid mixture elaborated by C.purpurea. D-lysergyl-tripeptides are assembled by the nonribosomal peptide synthetases and released as N-(D-lysergyl-aminoacyl)-lactams. Cyclolization of the D-lysergyl-tripeptides is performed by the Fe(2+)/2-ketoglutarate-dependent dioxygenase easH which introduces a hydroxyl group into N-(D-lysergyl-aminoacyl)-lactam at alpha-C of the aminoacyl residue followed by spontaneous condensation with the terminal lactam carbonyl group. The protein is Agroclavine dehydrogenase of Claviceps purpurea (strain 20.1) (Ergot fungus).